A 1357-amino-acid polypeptide reads, in one-letter code: DNA-directed RNA polymerase subunit beta (1357 aa).

This sequence belongs to the RNA polymerase beta chain family. In terms of assembly, the RNAP catalytic core consists of 2 alpha, 1 beta, 1 beta' and 1 omega subunit. When a sigma factor is associated with the core the holoenzyme is formed, which can initiate transcription.

The enzyme catalyses RNA(n) + a ribonucleoside 5'-triphosphate = RNA(n+1) + diphosphate. Functionally, DNA-dependent RNA polymerase catalyzes the transcription of DNA into RNA using the four ribonucleoside triphosphates as substrates. The protein is DNA-directed RNA polymerase subunit beta of Ectopseudomonas mendocina (strain ymp) (Pseudomonas mendocina).